The sequence spans 327 residues: E3 ubiquitin ligase Rnf121 (327 aa).

The next 5 helical transmembrane spans lie at 50-70 (MHAEMVLILIATLVVAQLLLV), 79-96 (SYNMVTLFQMWIVPVYFT), 99-119 (LHWWRFLGIWFLFSIVTAFVT), 148-168 (ATGIVGYIAVMFTLFGLNLLF), and 173-193 (EDAMDFGISLLFYGLYYGVLG). The segment at 226–276 (CAVCGQQIFVDVNEEGIIENTYRLSCNHVFHEFCIRGWCIVGKKQTCPYCK) adopts an RING-type; atypical zinc-finger fold.

This sequence belongs to the RNF121 family.

The protein resides in the endoplasmic reticulum membrane. It carries out the reaction S-ubiquitinyl-[E2 ubiquitin-conjugating enzyme]-L-cysteine + [acceptor protein]-L-lysine = [E2 ubiquitin-conjugating enzyme]-L-cysteine + N(6)-ubiquitinyl-[acceptor protein]-L-lysine.. It functions in the pathway protein modification; protein ubiquitination. In terms of biological role, E3 ubiquitin ligase which accepts ubiquitin and transfers it to substrates thereby promoting their degradation by the endoplasmic reticulum-associated degradation (ERAD) pathway which is a pathway involved in ubiquitin-dependent degradation of misfolded endoplasmic reticulum proteins. May regulate the unfolded protein response to reduce endoplasmic reticulum stress. The sequence is that of E3 ubiquitin ligase Rnf121 (rnf121) from Xenopus tropicalis (Western clawed frog).